A 174-amino-acid chain; its full sequence is Transcription antitermination protein NusB (174 aa).

This sequence belongs to the NusB family.

Functionally, involved in transcription antitermination. Required for transcription of ribosomal RNA (rRNA) genes. Binds specifically to the boxA antiterminator sequence of the ribosomal RNA (rrn) operons. This Rhodopseudomonas palustris (strain TIE-1) protein is Transcription antitermination protein NusB.